The sequence spans 238 residues: Tetraspanin-8 (238 aa).

Topologically, residues 1–9 are cytoplasmic; sequence MAGVNVCIK. Residues 10 to 33 traverse the membrane as a helical segment; that stretch reads CSMFIFNFVFWLCGAIILSVAISI. At 34–57 the chain is on the extracellular side; that stretch reads RAGKIGQEILAPGDADLNLFIAVN. The helical transmembrane segment at 58-72 threads the bilayer; it reads ILIFVGAVIMILGFL. The Cytoplasmic portion of the chain corresponds to 73–83; the sequence is GCCGAMKENQF. The chain crosses the membrane as a helical span at residues 84–109; that stretch reads MMILFFVGLLMILLLQVAAGIVATTR. The Extracellular portion of the chain corresponds to 110–206; that stretch reads KSKTEQALNK…ASISQMFSKR (97 aa). The N-linked (GlcNAc...) asparagine glycan is linked to asparagine 118. A helical membrane pass occupies residues 207-231; that stretch reads LFIVLALAFGLAAIEVLGLIFSIVL. Over 232–238 the chain is Cytoplasmic; that stretch reads YCQMRKK.

Belongs to the tetraspanin (TM4SF) family. Forms homooligomers. Interacts with MEP1B. Interacts with integrin alpha3/ITGA3. Interacts with RICTOR and MTOR. Interacts with ADAM17. Interacts with ECE1.

Its subcellular location is the cell membrane. Functionally, structural component of specialized membrane microdomains known as tetraspanin-enriched microdomains (TERMs), which act as platforms for receptor clustering and signaling. Participates thereby in diverse biological functions such as cell signal transduction, migration and protein trafficking. Promotes ADAM17-mediated TNF-alpha processing through recruitment of ADAM17 to tetraspanin-enriched micro-domains (TEMs). Forms a complex with RICTOR and integrin alpha3/ITGA3 to mediate mTORC2 activation and AKT1 phosphorylation leading to cell migration. Reduces apoptosis and autophagy induced by high glucose levels through forming a complex with mTOR and RICTOR. Contributes to the maintenance of intestinal epithelial barrier and plays a role in the regulation of intestine inflammation by switching interferon gamma receptor 1/IFNGR1 from clathrin-dependent to lipid raft-dependent endocytosis route to limit STAT1 activation magnitude and duration. Acts as a modulator of the endothelin axis by associating with endothelin converting enzyme ECE1 and regulating its activity of conversion of the endothelin-1 precursor to endothelin. The sequence is that of Tetraspanin-8 (TSPAN8) from Bos taurus (Bovine).